Consider the following 180-residue polypeptide: Glycodelin (180 aa).

Residues 1–18 (MLCLLLTLGVALVCGVPA) form the signal peptide. Asn-46 and Asn-81 each carry an N-linked (GlcNAc...) (complex) asparagine glycan. 2 cysteine pairs are disulfide-bonded: Cys-84-Cys-178 and Cys-124-Cys-137.

Belongs to the calycin superfamily. Lipocalin family. Homodimer. Four distinct glycoforms A, C, F and S arise from different N-linked oligosaccharide chains at amino acid residues Asn-46 and Asn-81. Glycodelin-A and -F are taken up by the cumulus cells in which partial deglycosylation takes place to produce glycodelin-C. As to expression, this protein is, the main protein synthesized and secreted in the endometrium from mid-luteal phase of the menstrual cycle and during the first semester of pregnancy. Glycodelin-A is expressed in amniotic fluid, endometrium/decidua and maternal serum (at protein level). Glycodelin-F is expressed in follicular fluid, luteinized granulosa cells and the oviduct (at protein level). Glycodelin-S is expressed in seminal plasma and seminal vesicles (at protein level). Glycodelin-C is detected in cumulus cells (at protein level), but cumulus cells do not synthesize Glycodelin-C but take up and convert glycodelin-A and -F vis glycan remodeling.

Its subcellular location is the secreted. Glycoprotein that regulates critical steps during fertilization and also has immunomonomodulatory effects. Four glycoforms, namely glycodelin-S, -A, -F and -C have been identified in reproductive tissues that differ in glycosylation and biological activity. Glycodelin-A has contraceptive and immunosuppressive activities. Glycodelin-C stimulates binding of spermatozoa to the zona pellucida. Glycodelin-F inhibits spermatozoa-zona pellucida binding and significantly suppresses progesterone-induced acrosome reaction of spermatozoa. Glycodelin-S in seminal plasma maintains the uncapacitated state of human spermatozoa. This chain is Glycodelin (PAEP), found in Homo sapiens (Human).